The primary structure comprises 699 residues: Pollen-specific leucine-rich repeat extensin-like protein 4 (699 aa).

The N-terminal stretch at 1–39 is a signal peptide; it reads MPFYKQPWVFSKVFVLAMAKPPSFGCCFFLLFFSFLSSS. N-linked (GlcNAc...) asparagine glycosylation occurs at asparagine 106. 9 LRR repeats span residues 133–157, 158–180, 182–205, 206–229, 231–251, 253–275, 276–299, 301–323, and 324–347; these read VTVV…LGLM, TDVA…SFEK, KLMH…VLSW, PDVK…LFKK, LDAI…SLGE, PASV…IGNM, KNLN…IGKL, NVTV…FVGL, and TSVE…ICQL. A glycan (N-linked (GlcNAc...) asparagine) is linked at asparagine 301. The N-linked (GlcNAc...) asparagine glycan is linked to asparagine 352. A disordered region spans residues 411-699; the sequence is KCAGGSSTPS…SPPPPMFAGY (289 aa). 4 stretches are compositionally biased toward pro residues: residues 421–466, 482–504, 518–659, and 690–699; these read KPSP…PVPT, KPSP…PQPD, PPPA…PPAP, and SPPPPMFAGY. Positions 517-699 are contains the Ser-Pro(4) repeats; sequence SPPPAPVNSP…SPPPPMFAGY (183 aa).

Hydroxylated on proline residues in the S-P-P-P-P repeat. Post-translationally, O-glycosylated on hydroxyprolines. As to expression, expressed in flowers, stamen, pollen, and pollinated carpels.

Its subcellular location is the secreted. It localises to the cell wall. Modulates cell morphogenesis by regulating cell wall formation and assembly, and/or growth polarization. The chain is Pollen-specific leucine-rich repeat extensin-like protein 4 (PEX4) from Arabidopsis thaliana (Mouse-ear cress).